The chain runs to 361 residues: Blue-sensitive opsin (361 aa).

The Extracellular segment spans residues 1–43; sequence MHPPRPTTDLPEDFYIPMALDAPNITALSPFLVPQTHLGSPGL. A glycan (N-linked (GlcNAc...) asparagine) is linked at N24. The chain crosses the membrane as a helical span at residues 44-68; the sequence is FRAMAAFMFLLIALGVPINTLTIFC. The Cytoplasmic segment spans residues 69-80; that stretch reads TARFRKLRSHLN. A helical membrane pass occupies residues 81–106; sequence YILVNLALANLLVILVGSTTACYSFS. Over 107 to 120 the chain is Extracellular; sequence QMYFALGPTACKIE. A disulfide bridge links C117 with C194. The chain crosses the membrane as a helical span at residues 121 to 140; the sequence is GFAATLGGMVSLWSLAVVAF. The Cytoplasmic segment spans residues 141-159; the sequence is ERFLVICKPLGNFTFRGSH. Residues 160-183 form a helical membrane-spanning segment; it reads AVLGCVATWVLGFVASAPPLFGWS. The Extracellular segment spans residues 184-209; it reads RYIPEGLQCSCGPDWYTTDNKWHNES. The chain crosses the membrane as a helical span at residues 210 to 237; that stretch reads YVLFLFTFCFGVPLAIIVFSYGRLLITL. At 238–259 the chain is on the cytoplasmic side; sequence RAVARQQEQSATTQKADREVTK. Residues 260–283 form a helical membrane-spanning segment; the sequence is MVVVMVLGFLVCWAPYTAFALWVV. The Extracellular portion of the chain corresponds to 284-291; the sequence is THRGRSFE. Residues 292-316 traverse the membrane as a helical segment; that stretch reads VGLASIPSVFSKSSTVYNPVIYVLM. K303 carries the post-translational modification N6-(retinylidene)lysine. Over 317 to 361 the chain is Cytoplasmic; the sequence is NKQFRSCMLKLLFCGRSPFGDDEDVSGSSQATQVSSVSSSHVAPA. Positions 338–361 are disordered; the sequence is DEDVSGSSQATQVSSVSSSHVAPA. A compositionally biased stretch (low complexity) spans 342–361; sequence SGSSQATQVSSVSSSHVAPA.

This sequence belongs to the G-protein coupled receptor 1 family. Opsin subfamily. Post-translationally, phosphorylated on some or all of the serine and threonine residues present in the C-terminal region. As to expression, the color pigments are found in the cone photoreceptor cells.

It is found in the membrane. In terms of biological role, visual pigments are the light-absorbing molecules that mediate vision. They consist of an apoprotein, opsin, covalently linked to cis-retinal. This Gallus gallus (Chicken) protein is Blue-sensitive opsin.